Reading from the N-terminus, the 96-residue chain is Protein RnfH (96 aa).

The protein belongs to the UPF0125 (RnfH) family.

The sequence is that of Protein RnfH from Escherichia coli O139:H28 (strain E24377A / ETEC).